We begin with the raw amino-acid sequence, 161 residues long: uncharacterized protein (161 aa).

It belongs to the SixA phosphatase family.

This is an uncharacterized protein from Mycobacterium leprae (strain TN).